Here is a 31-residue protein sequence, read N- to C-terminus: Photosystem II reaction center protein T (31 aa).

Residues 3 to 23 (SLVYIFVFVVALGVLFFAIAF) traverse the membrane as a helical segment.

This sequence belongs to the PsbT family. In terms of assembly, PSII is composed of 1 copy each of membrane proteins PsbA, PsbB, PsbC, PsbD, PsbE, PsbF, PsbH, PsbI, PsbJ, PsbK, PsbL, PsbM, PsbT, PsbX, PsbY, PsbZ, Psb30/Ycf12, peripheral proteins PsbO, CyanoQ (PsbQ), PsbU, PsbV and a large number of cofactors. It forms dimeric complexes.

The protein localises to the cellular thylakoid membrane. Functionally, found at the monomer-monomer interface of the photosystem II (PS II) dimer, plays a role in assembly and dimerization of PSII. PSII is a light-driven water plastoquinone oxidoreductase, using light energy to abstract electrons from H(2)O, generating a proton gradient subsequently used for ATP formation. The sequence is that of Photosystem II reaction center protein T from Synechococcus elongatus (strain ATCC 33912 / PCC 7942 / FACHB-805) (Anacystis nidulans R2).